The chain runs to 1943 residues: Sickle tail protein homolog (1943 aa).

Disordered regions lie at residues 1–79 (MEEN…KEIL) and 112–177 (QERL…RSTN). The span at 38–47 (AECRRTKERL) shows a compositional bias: basic and acidic residues. A compositionally biased stretch (polar residues) spans 48–62 (SNGNSRGSVSKSSRN). S169 carries the phosphoserine modification. Residue Y244 is modified to Phosphotyrosine. Positions 290-331 (ARGDGPGAPRPGSTAHPPHAIPNSPPSTPVPHSMPPSPSRIP) are disordered. Pro residues predominate over residues 308-328 (HAIPNSPPSTPVPHSMPPSPS). S357 carries O-linked (GlcNAc) serine glycosylation. Phosphoserine is present on residues S361 and S365. Position 393 is a phosphotyrosine (Y393). The interval 456-476 (RKYPDSHLPTLGSKTPPASPH) is disordered. Residue T470 is modified to Phosphothreonine. 2 positions are modified to phosphoserine: S474 and S526. 2 coiled-coil regions span residues 557-581 (RETR…QSAL) and 644-685 (MSLL…ELEI). At S809 the chain carries Phosphoserine. The disordered stretch occupies residues 848 to 874 (VLKSQEEAAHTSGQPFHSTGAPGDAKS). A coiled-coil region spans residues 957–985 (SAKNRAVSIEKAEKKWEEKRQNLDHYNGK). Disordered stretches follow at residues 1003-1230 (PNLE…SDAS), 1305-1329 (KTKE…TESS), and 1352-1377 (PKEA…TEEN). A phosphoserine mark is found at S1027, S1030, S1033, and S1044. Over residues 1044–1053 (SPPPPPPPPR) the composition is skewed to pro residues. Composition is skewed to basic and acidic residues over residues 1155-1167 (EPSR…KDTR), 1174-1192 (PKEK…KSDV), and 1305-1318 (KTKE…DKCH). Residues 1368–1377 (SSSSSPTEEN) are compositionally biased toward polar residues. S1461 is subject to Phosphoserine. The stretch at 1464–1490 (FEECDEELERMMMEEKIEEEEEEENGD) forms a coiled coil. Disordered regions lie at residues 1481-1572 (EEEE…PKKK), 1606-1660 (EEEE…EIRK), and 1677-1943 (ENTI…KETS). Composition is skewed to polar residues over residues 1491-1501 (SVVQNNNTSQM) and 1512-1533 (RTGQ…TRNP). Composition is skewed to basic and acidic residues over residues 1539-1548 (NRTELNKFSH) and 1612-1625 (GTLK…RFEI). The segment covering 1643 to 1653 (QPSIESTSPIS) has biased composition (polar residues). Residues 1656 to 1686 (DEIRKNTYRTLDSLEQTIKQLENTISEMSPK) adopt a coiled-coil conformation. Polar residues-rich tracts occupy residues 1691 to 1706 (TSCS…SSHI) and 1731 to 1747 (IPSA…QTSR). At S1739 the chain carries Phosphoserine. The span at 1763 to 1775 (KPGKQSKLQDPRQ) shows a compositional bias: basic and acidic residues. Low complexity predominate over residues 1806 to 1825 (SPSSGKSSSLPSSSGDSSNL). Polar residues-rich tracts occupy residues 1834-1843 (SIASNPLSPQ) and 1853-1869 (LIPS…SLTH). Position 1841 is a phosphoserine (S1841). The span at 1892–1905 (SFSSSPPSPASSVS) shows a compositional bias: low complexity. S1896, S1899, and S1902 each carry phosphoserine. Polar residues predominate over residues 1906–1943 (LNQGAKGTRTIHTPSLTSYKAQNGSSSKATPSTAKETS).

Interacts with CPNE4 (via VWFA domain).

Its subcellular location is the cytoplasm. It is found in the cytoskeleton. The protein resides in the microtubule organizing center. The protein localises to the centrosome. Its function is as follows. Required for normal development of intervertebral disks. The polypeptide is Sickle tail protein homolog (KIAA1217) (Homo sapiens (Human)).